The sequence spans 304 residues: Glutaminase (304 aa).

Substrate-binding residues include Ser63, Asn114, Glu158, Asn165, Tyr189, Tyr240, and Val258.

It belongs to the glutaminase family. In terms of assembly, homotetramer.

It catalyses the reaction L-glutamine + H2O = L-glutamate + NH4(+). This chain is Glutaminase, found in Shewanella sp. (strain ANA-3).